A 72-amino-acid chain; its full sequence is Small, acid-soluble spore protein 1 (72 aa).

The protein belongs to the alpha/beta-type SASP family.

SASP are bound to spore DNA. They are double-stranded DNA-binding proteins that cause DNA to change to an a-like conformation. They protect the DNA backbone from chemical and enzymatic cleavage and are thus involved in dormant spore's high resistance to UV light. The protein is Small, acid-soluble spore protein 1 (Sh-1) of Halobacillus halophilus (strain ATCC 35676 / DSM 2266 / JCM 20832 / KCTC 3685 / LMG 17431 / NBRC 102448 / NCIMB 2269) (Sporosarcina halophila).